Reading from the N-terminus, the 109-residue chain is Large ribosomal subunit protein uL24 (109 aa).

This sequence belongs to the universal ribosomal protein uL24 family. In terms of assembly, part of the 50S ribosomal subunit.

Functionally, one of two assembly initiator proteins, it binds directly to the 5'-end of the 23S rRNA, where it nucleates assembly of the 50S subunit. In terms of biological role, one of the proteins that surrounds the polypeptide exit tunnel on the outside of the subunit. The sequence is that of Large ribosomal subunit protein uL24 from Rickettsia canadensis (strain McKiel).